The primary structure comprises 603 residues: Arginine--tRNA ligase (603 aa).

The 'HIGH' region motif lies at Pro143–His153.

It belongs to the class-I aminoacyl-tRNA synthetase family. In terms of assembly, monomer.

It is found in the cytoplasm. It carries out the reaction tRNA(Arg) + L-arginine + ATP = L-arginyl-tRNA(Arg) + AMP + diphosphate. This is Arginine--tRNA ligase from Prochlorococcus marinus (strain MIT 9211).